Here is a 1025-residue protein sequence, read N- to C-terminus: Serine/threonine-protein kinase TAO2 (1025 aa).

The Protein kinase domain maps to 28–281; it reads FADLREIGHG…SDMLLKHRFL (254 aa). ATP-binding positions include 34–42 and Lys57; that span reads IGHGSFGAV. The active-site Proton acceptor is the Asp151. Residues 349 to 373 show a composition bias toward low complexity; the sequence is ESSQSVPSMSISASSQSSSVNSLAD. The segment at 349–377 is disordered; sequence ESSQSVPSMSISASSQSSSVNSLADASDD. 2 coiled-coil regions span residues 457-650 and 755-876; these read SALR…ECAM and ILKR…EIEA. 2 disordered regions span residues 899-930 and 945-1025; these read FNQG…QNTG and SASW…LSYS. Pro residues predominate over residues 905–914; the sequence is APPPGWPSRP. Positions 947–986 are enriched in low complexity; it reads SWGLHPPGSSSSLSALPSSSSSSSSSPSSSSGGRPGLLLL. Residues 1007–1025 are compositionally biased toward polar residues; that stretch reads SRSTSVTSQLSNGSHLSYS.

Belongs to the protein kinase superfamily. STE Ser/Thr protein kinase family. STE20 subfamily. Mg(2+) is required as a cofactor.

The enzyme catalyses L-seryl-[protein] + ATP = O-phospho-L-seryl-[protein] + ADP + H(+). The catalysed reaction is L-threonyl-[protein] + ATP = O-phospho-L-threonyl-[protein] + ADP + H(+). In terms of biological role, serine/threonine-protein kinase involved in different processes such as apoptotic morphological changes, MAPK8/JNK and MAPK14/p38 MAPK signaling pathway. Activates the JNK MAP kinase pathway. In Xenopus laevis (African clawed frog), this protein is Serine/threonine-protein kinase TAO2 (taok2).